The following is a 463-amino-acid chain: MISAISSPWLTQLSHFCDVAAFTANSLSSLNASGGYHLSPSPGDPYSQHEPHYEPCSASQHSYSFGHACPEPESGASSSSCASSTPGSGSTGSSGSSKAPVKKNPKVANITVQLEMKALWDEFNQLGTEMIVTKAGRRMFPTFQVKIFGMDPMADYMLLMDFVPVDDKRYRYAFHSSSWLVAGKADPATPGRVHYHPDSPAKGAQWMKQIVSFDKLKLTNNLLDDNGHIILNSMHRYQPRFHVVYVDPRKDSEKYAEENFKTFVFEETRFTAVTAYQNHRITQLKIASNPFAKGFRDCDPEDWPRNHRPGSLPLMNAFARSRNPVSSPPQNGSDKDGDGRREYERDTSGTPLHGDAAHQQLMSRVLSPSLPVPGGLVPLSTGRPSPPHELRLDPHSQGSEPLHHHPYKYPTSYDHYLGAKTRPAPYPLPSIRGHGYHHHPMNPAAANMYSGAGAPGSYEYGPR.

Disordered stretches follow at residues Ser39–Ala58 and Gly75–Lys103. Positions Gly75–Ser97 are enriched in low complexity. The segment at residues Leu119–Asp297 is a DNA-binding region (T-box). Disordered stretches follow at residues Arg320–Gly354 and Ser367–His405. Residues Asn323 to Gly332 show a composition bias toward polar residues. Over residues Ser333–Thr347 the composition is skewed to basic and acidic residues. Over residues Ser367–Ser380 the composition is skewed to low complexity. Positions Lys420–Ile431 match the Nuclear localization signal motif.

As to quaternary structure, binds DNA as a dimer. Interacts with dscr6/ripply3.

It is found in the nucleus. Functionally, probable transcriptional regulator involved in developmental processes. Binds to the palindromic T site 5'-TTCACACCTAGGTGTGAA-3' DNA sequence. Induces pre-placodal ectoderm (PPE) gene expression in regions where RIPPLY3 is absent. Plays a role in the formation of the anteroposterior (AP) axis during embryonic development; required to establish the posterolateral border of the pre-placodal ectoderm (PPE) acting downstream of the retinoic acid receptor (RAR) signaling. In Xenopus tropicalis (Western clawed frog), this protein is T-box transcription factor TBX1 (tbx1).